Here is a 193-residue protein sequence, read N- to C-terminus: Putative 3-methyladenine DNA glycosylase (193 aa).

The protein belongs to the DNA glycosylase MPG family.

In Francisella tularensis subsp. holarctica (strain FTNF002-00 / FTA), this protein is Putative 3-methyladenine DNA glycosylase.